A 372-amino-acid polypeptide reads, in one-letter code: DNA replication and repair protein RecF (372 aa).

30–37 (GENGQGKT) serves as a coordination point for ATP.

It belongs to the RecF family.

It localises to the cytoplasm. Its function is as follows. The RecF protein is involved in DNA metabolism; it is required for DNA replication and normal SOS inducibility. RecF binds preferentially to single-stranded, linear DNA. It also seems to bind ATP. The polypeptide is DNA replication and repair protein RecF (Anaeromyxobacter sp. (strain K)).